A 54-amino-acid polypeptide reads, in one-letter code: Ovomucoid (54 aa).

One can recognise a Kazal-like domain in the interval 4 to 54 (VDCSDYPKPVCSLDYMPLCGSDNTTYNNKCIFCNAVVDSNGTITLSHFGKC). 3 disulfides stabilise this stretch: C6-C36, C14-C33, and C22-C54. N-linked (GlcNAc...) asparagine glycosylation occurs at N43.

It localises to the secreted. The chain is Ovomucoid from Haemorhous mexicanus (House finch).